The sequence spans 802 residues: Phenylalanine--tRNA ligase beta subunit (802 aa).

The tRNA-binding domain maps to 40 to 155 (SASLKNVVVG…AHVETGVNAI (116 aa)). In terms of domain architecture, B5 spans 409 to 484 (KAVNKIETSL…RIYGYDEIPV (76 aa)). 4 residues coordinate Mg(2+): aspartate 462, aspartate 468, glutamate 471, and glutamate 472. The region spanning 709 to 802 (PRYPEMTRDL…LQEKLNAIIR (94 aa)) is the FDX-ACB domain.

Belongs to the phenylalanyl-tRNA synthetase beta subunit family. Type 1 subfamily. Tetramer of two alpha and two beta subunits. Mg(2+) serves as cofactor.

The protein resides in the cytoplasm. The catalysed reaction is tRNA(Phe) + L-phenylalanine + ATP = L-phenylalanyl-tRNA(Phe) + AMP + diphosphate + H(+). In Listeria monocytogenes serovar 1/2a (strain ATCC BAA-679 / EGD-e), this protein is Phenylalanine--tRNA ligase beta subunit.